The chain runs to 786 residues: MATKEELLSLGLSDSKVAETLKNVKLTETIGSIVKLASESGEISKQKGTLLYQLATKLKPQVAAHTPLVVKYIMNDGIKTEPQLSAAIEYLLSHTVKGIQVPDFEKSCGVGVVVTIDDIEAAVTKVIGQHREKIVAERYSFPAGKLLGELRALLPWADGAITKKEVDLRFLELLGPKTAEDLAPKKKEKKPEGPKPSKDAAAAATAPGTKNQKEASPEEFADGAETMDELLRTRAHFHKVGENFKQDGYVTTPKTAELLKAHVAAVGGKVVTRFPPEPNGVLHIGHAKAININFGYAKAMGGVCNLRFDDTNPEKEEEKFFSAIEDIVHWLGYDPARVTHSSDNFQQLYLWAVKLIQKGLAFVCHQKVEEMRGFEVQLSPWRERPIEENIQLFEDMKNGKFDEGEATLRLKLTLEEGKVDPVAYRIKYVPHHRTGNQWCIYPTYDYTHCLCDSIENITHSLCTKEFQSRRSSYYWLCNALDIYCPVQWEYGRLNVNYTVVSKRKILKLITTKTVNDWDDPRLFTLTALRRRGIPSEAINRFVAKLGLTMSQMVIDPHVLDATVRDYLNIHAPRTMAVLEGLKLTIENFSELNLPSSVDVPDFPSDPTDPRKHSVSVDREIFIEKSDYKPDDSDKSFRRLTPKQAVGLKHIGLVLRFVKEVKDAEGHVTEVVVKAEKLSEKDKPKAFIHWVAKPVSCEVRLYDRLFKSKNPEDAQLVPGGFLSDINPDSLTVVYNALIDQSIAKSKVYDRFQFERIGFFCVDRDSTSSTLVFNRTVMLKDGGASGKN.

The segment covering 181-198 (DLAPKKKEKKPEGPKPSK) has biased composition (basic and acidic residues). The segment at 181–218 (DLAPKKKEKKPEGPKPSKDAAAAATAPGTKNQKEASPE) is disordered. The 'HIGH' region signature appears at 276–286 (PEPNGVLHIGH). Residues 277–279 (EPN) and 283–289 (HIGHAKA) each bind ATP. L-glutamine contacts are provided by aspartate 309 and tyrosine 444. ATP is bound by residues threonine 463, 492–493 (RL), and 500–502 (VSK). The 'KMSKS' region signature appears at 499-503 (VVSKR).

Belongs to the class-I aminoacyl-tRNA synthetase family.

It carries out the reaction tRNA(Gln) + L-glutamine + ATP = L-glutaminyl-tRNA(Gln) + AMP + diphosphate. This is Probable glutamine--tRNA ligase from Caenorhabditis elegans.